An 84-amino-acid polypeptide reads, in one-letter code: Putative regulatory protein Hore_09800 (84 aa).

It belongs to the RemA family.

In Halothermothrix orenii (strain H 168 / OCM 544 / DSM 9562), this protein is Putative regulatory protein Hore_09800.